Here is a 402-residue protein sequence, read N- to C-terminus: Peptidyl-prolyl cis-trans isomerase FKBP8 (402 aa).

A compositionally biased stretch (acidic residues) spans 28-39; the sequence is DGVDDAEEEDDL. A disordered region spans residues 28-54; the sequence is DGVDDAEEEDDLSGLPPLEDMGQPTVE. The PPIase FKBP-type domain occupies 110–194; that stretch reads GQVVTVHLQM…CLEVTLKTAE (85 aa). One copy of the TPR 1 repeat lies at 211 to 244; that stretch reads ANRKRECGNAHYQRADFVLAANSYDLAIKAITSN. Glycyl lysine isopeptide (Lys-Gly) (interchain with G-Cter in ubiquitin) cross-links involve residues lysine 239, lysine 261, lysine 263, and lysine 274. TPR repeat units lie at residues 262–295 and 296–329; these read VKCL…QPDN and IKAL…EPSN. A Phosphoserine modification is found at serine 286. Residues lysine 297, lysine 304, lysine 324, lysine 330, lysine 338, lysine 341, and lysine 342 each participate in a glycyl lysine isopeptide (Lys-Gly) (interchain with G-Cter in ubiquitin) cross-link. Residues 380–400 traverse the membrane as a helical segment; sequence WLFGATAVALGGVALSVVIAA.

In terms of assembly, homomultimers or heteromultimers (Potential). Forms heterodimer with calmodulin. When activated by calmodulin and calcium, interacts with the BH4 domain of BCL2 and weakly with BCLX isoform Bcl-X(L). Does not bind and inhibit calcineurin. Interacts with ZFYVE27; may negatively regulate ZFYVE27 phosphorylation. Ca(2+) serves as cofactor. Ubiquitinated by PRKN during mitophagy, leading to its degradation and enhancement of mitophagy. Deubiquitinated by USP30. As to expression, detected throughout the embryonic body, in caudal neural tube, limbs and head. Detected in adult retina, brain, heart, kidney, liver, pancreas, lung, testis and urinary bladder (at protein level). Detected in adult brain, kidney, liver, testis and trigeminal nerve, and in embryo. Detected at lower levels in lung, spleen, heart and ovary. Widely expressed in forebrain. Detected in the Purkinje cell layer in the cerebellum and in hippocampus neurons.

It localises to the mitochondrion membrane. The enzyme catalyses [protein]-peptidylproline (omega=180) = [protein]-peptidylproline (omega=0). Constitutively inactive PPiase, which becomes active when bound to calmodulin and calcium. Seems to act as a chaperone for BCL2, targets it to the mitochondria and modulates its phosphorylation state. The BCL2/FKBP8/calmodulin/calcium complex probably interferes with the binding of BCL2 to its targets. The active form of FKBP8 may therefore play a role in the regulation of apoptosis. Required for normal embryonic development. The protein is Peptidyl-prolyl cis-trans isomerase FKBP8 (Fkbp8) of Mus musculus (Mouse).